The chain runs to 307 residues: Deaminated glutathione amidase, chloroplastic/cytosolic (307 aa).

The transit peptide at 1–36 directs the protein to the chloroplast; that stretch reads MNAYSVSLDFTKPSLFTRITLSSQIPLTMATTVNKT. Residues 37 to 286 enclose the CN hydrolase domain; it reads VRVAAAQMTS…TGIVVADIDF (250 aa). Glutamate 76 acts as the Proton acceptor in catalysis. The Proton donor role is filled by lysine 147. Cysteine 188 serves as the catalytic Nucleophile.

It belongs to the nitrilase superfamily. NIT1/NIT2 family.

It localises to the plastid. Its subcellular location is the chloroplast. It is found in the cytoplasm. It carries out the reaction N-(4-oxoglutaryl)-L-cysteinylglycine + H2O = L-cysteinylglycine + 2-oxoglutarate. It catalyses the reaction N-(4-carboxy-4-oxobutanoyl)-L-ethylglycylglycine + H2O = N-(2-aminobutanoyl)glycine + 2-oxoglutarate. In terms of biological role, catalyzes the hydrolysis of the amide bond in N-(4-oxoglutarate)-L-cysteinylglycine (deaminated glutathione), a metabolite repair reaction to dispose of the harmful deaminated glutathione. Possesses amidase activity toward deaminated ophthalmate in vitro. This is Deaminated glutathione amidase, chloroplastic/cytosolic from Arabidopsis thaliana (Mouse-ear cress).